A 130-amino-acid chain; its full sequence is Small ribosomal subunit protein uS11 (130 aa).

Belongs to the universal ribosomal protein uS11 family. Part of the 30S ribosomal subunit. Interacts with proteins S7 and S18. Binds to IF-3.

Located on the platform of the 30S subunit, it bridges several disparate RNA helices of the 16S rRNA. Forms part of the Shine-Dalgarno cleft in the 70S ribosome. The sequence is that of Small ribosomal subunit protein uS11 from Gloeothece citriformis (strain PCC 7424) (Cyanothece sp. (strain PCC 7424)).